Reading from the N-terminus, the 403-residue chain is MSKKVEVNKVVVAYSGGLDTSVIIPWLKENYNCEVIAFVADVGQGEEELEGIEAKAIASGATECYVVDLKEEMVSEYIFPTLKTGALYEGKYLLGTSMARPIIAKAQVEVARNVGADALCHGCTGKGNDQIRFEGAFAALAPDLHVIAPWREWDLVSREECLDYLAERNIPCTASLTKIYSRDANAWHISTEGGVLEETWNAPNDDCWAWTVDPEQAPNESETISLKVEKGAVVAVDGKAMTPYEVVVYLNEKGAKHGVGRIDIVENRLVGMKSRGCYETPGGTIINEALRAVEQLVLDKTSFEFREELGIKASHLVYDGRWFTPLCKSILAASEELAKDVNGEVVIKLYKGHATVIQKRSDNSLYSEEFATFGADEVYDQSHAEGFIRLYSLSSRIRALNSK.

ATP-binding positions include 13–21 (AYSGGLDTS) and Ala-40. Positions 92 and 97 each coordinate L-citrulline. Gly-122 contacts ATP. The L-aspartate site is built by Thr-124, Asn-128, and Asp-129. An L-citrulline-binding site is contributed by Asn-128. L-citrulline is bound by residues Arg-132, Ser-181, Ser-190, Glu-266, and Tyr-278.

Belongs to the argininosuccinate synthase family. Type 1 subfamily. As to quaternary structure, homotetramer.

It is found in the cytoplasm. The enzyme catalyses L-citrulline + L-aspartate + ATP = 2-(N(omega)-L-arginino)succinate + AMP + diphosphate + H(+). It functions in the pathway amino-acid biosynthesis; L-arginine biosynthesis; L-arginine from L-ornithine and carbamoyl phosphate: step 2/3. This chain is Argininosuccinate synthase, found in Aliivibrio fischeri (strain ATCC 700601 / ES114) (Vibrio fischeri).